The following is a 234-amino-acid chain: 2,3-bisphosphoglycerate-dependent phosphoglycerate mutase 1 (234 aa).

Residues 14-21, 27-28, Arg66, and 93-96 each bind substrate; these read RHGQSIWN, TG, and ERHY. His15 serves as the catalytic Tele-phosphohistidine intermediate. Residue Glu93 is the Proton donor/acceptor of the active site.

The protein belongs to the phosphoglycerate mutase family. BPG-dependent PGAM subfamily. In terms of assembly, homodimer.

It catalyses the reaction (2R)-2-phosphoglycerate = (2R)-3-phosphoglycerate. Its pathway is carbohydrate degradation; glycolysis; pyruvate from D-glyceraldehyde 3-phosphate: step 3/5. Functionally, catalyzes the interconversion of 2-phosphoglycerate and 3-phosphoglycerate. The sequence is that of 2,3-bisphosphoglycerate-dependent phosphoglycerate mutase 1 from Nitrosomonas europaea (strain ATCC 19718 / CIP 103999 / KCTC 2705 / NBRC 14298).